A 128-amino-acid chain; its full sequence is Cytochrome c' (128 aa).

7 residues coordinate heme c: glutamine 13, glutamine 17, glutamate 69, threonine 70, cysteine 118, cysteine 121, and histidine 122.

Post-translationally, binds 1 heme c group covalently per subunit.

Its function is as follows. Cytochrome c' is the most widely occurring bacterial c-type cytochrome. Cytochromes c' are high-spin proteins and the heme has no sixth ligand. Their exact function is not known. In Magnetospirillum fulvum (Rhodospirillum fulvum), this protein is Cytochrome c'.